The following is a 188-amino-acid chain: 3-deoxy-D-manno-octulosonate 8-phosphate phosphatase KdsC (188 aa).

2 residues coordinate Mg(2+): Asp-32 and Asp-34. Substrate is bound by residues Asp-34, 55–59, Arg-63, Arg-78, Arg-86, and Lys-102; that span reads NVRDG. Asp-125 lines the Mg(2+) pocket.

In terms of assembly, homotetramer. It depends on Mg(2+) as a cofactor. Co(2+) serves as cofactor.

The catalysed reaction is 3-deoxy-alpha-D-manno-2-octulosonate-8-phosphate + H2O = 3-deoxy-alpha-D-manno-oct-2-ulosonate + phosphate. The protein operates within carbohydrate biosynthesis; 3-deoxy-D-manno-octulosonate biosynthesis; 3-deoxy-D-manno-octulosonate from D-ribulose 5-phosphate: step 3/3. Its pathway is bacterial outer membrane biogenesis; lipopolysaccharide biosynthesis. With respect to regulation, inhibited by calcium, cadmium, mercury, and copper ions. Its function is as follows. Catalyzes the hydrolysis of 3-deoxy-D-manno-octulosonate 8-phosphate (KDO 8-P) to 3-deoxy-D-manno-octulosonate (KDO) and inorganic phosphate. This chain is 3-deoxy-D-manno-octulosonate 8-phosphate phosphatase KdsC, found in Escherichia coli (strain B / BL21-DE3).